The primary structure comprises 589 residues: V-type ATP synthase alpha chain 1 (589 aa).

Residue 239–246 participates in ATP binding; the sequence is GPFGAGKT.

This sequence belongs to the ATPase alpha/beta chains family.

The enzyme catalyses ATP + H2O + 4 H(+)(in) = ADP + phosphate + 5 H(+)(out). In terms of biological role, produces ATP from ADP in the presence of a proton gradient across the membrane. The V-type alpha chain is a catalytic subunit. The chain is V-type ATP synthase alpha chain 1 (atpA1) from Treponema pallidum (strain Nichols).